A 406-amino-acid chain; its full sequence is 5-methylthioadenosine/S-adenosylhomocysteine deaminase (406 aa).

2 residues coordinate Zn(2+): His-55 and His-57. Glu-84, Arg-136, Arg-148, and His-173 together coordinate substrate. His-200 is a binding site for Zn(2+). Residues Glu-203 and Asp-279 each coordinate substrate. Residue Asp-279 participates in Zn(2+) binding.

The protein belongs to the metallo-dependent hydrolases superfamily. MTA/SAH deaminase family. The cofactor is Zn(2+).

The enzyme catalyses S-adenosyl-L-homocysteine + H2O + H(+) = S-inosyl-L-homocysteine + NH4(+). The catalysed reaction is S-methyl-5'-thioadenosine + H2O + H(+) = S-methyl-5'-thioinosine + NH4(+). Its function is as follows. Catalyzes the deamination of 5-methylthioadenosine and S-adenosyl-L-homocysteine into 5-methylthioinosine and S-inosyl-L-homocysteine, respectively. Is also able to deaminate adenosine. Adenosine-5-monophosphate (AMP) and S-adenosyl-L-methionine (SAM) are not enzyme substrates. This is 5-methylthioadenosine/S-adenosylhomocysteine deaminase (mtaD) from Thermotoga maritima (strain ATCC 43589 / DSM 3109 / JCM 10099 / NBRC 100826 / MSB8).